The chain runs to 222 residues: MAGKPKLHYFNGRGRMEPIRWLLAAAGVEFEEKFIGSAEDLGKLRNDGSLMFQQVPMVEIDGMKLVQTRAILNYIASKYNLYGKDIKERALIDMYTEGMADLNEMILLLPLCRPEEKDAKIALIKEKTKSRYFPAFEKVLQSHGQDYLVGNKLSRADISLVELLYYVEELDSSLISNFPLLKALKTRISNLPTVKKFLQPGSPRKPPADAKALEEARKIFRF.

Alanine 2 carries the post-translational modification N-acetylalanine. One can recognise a GST N-terminal domain in the interval 3-83; the sequence is GKPKLHYFNG…YIASKYNLYG (81 aa). Lysine 4 carries the post-translational modification N6-succinyllysine. Residues tyrosine 9, arginine 45, 54 to 55, and 67 to 68 each bind glutathione; these read QV and QT. The GST C-terminal domain maps to 85-207; the sequence is DIKERALIDM…LQPGSPRKPP (123 aa).

Belongs to the GST superfamily. Alpha family. Homodimer.

The protein localises to the cytoplasm. It carries out the reaction RX + glutathione = an S-substituted glutathione + a halide anion + H(+). The enzyme catalyses androst-5-ene-3,17-dione = androst-4-ene-3,17-dione. It catalyses the reaction pregn-5-ene-3,20-dione = progesterone. Functionally, conjugation of reduced glutathione to a wide number of exogenous and endogenous hydrophobic electrophiles. Catalyzes isomerization reactions that contribute to the biosynthesis of steroid hormones. Efficiently catalyze obligatory double-bond isomerizations of delta(5)-androstene-3,17-dione and delta(5)-pregnene-3,20-dione, precursors to testosterone and progesterone, respectively. Has substantial activity toward aflatoxin B1-8,9-epoxide. The chain is Glutathione S-transferase A3 from Homo sapiens (Human).